The chain runs to 392 residues: DNA-directed RNA polymerase subunit Rpo1C (392 aa).

This sequence belongs to the RNA polymerase beta' chain family. In terms of assembly, part of the RNA polymerase complex.

It is found in the cytoplasm. The catalysed reaction is RNA(n) + a ribonucleoside 5'-triphosphate = RNA(n+1) + diphosphate. In terms of biological role, DNA-dependent RNA polymerase (RNAP) catalyzes the transcription of DNA into RNA using the four ribonucleoside triphosphates as substrates. Forms part of the jaw domain. In Sulfurisphaera tokodaii (strain DSM 16993 / JCM 10545 / NBRC 100140 / 7) (Sulfolobus tokodaii), this protein is DNA-directed RNA polymerase subunit Rpo1C.